A 74-amino-acid polypeptide reads, in one-letter code: RNA-binding protein Hfq (74 aa).

A Sm domain is found at 9-69 (DQFLNQLRKE…ISTFAPQKNV (61 aa)).

Belongs to the Hfq family. In terms of assembly, homohexamer.

In terms of biological role, RNA chaperone that binds small regulatory RNA (sRNAs) and mRNAs to facilitate mRNA translational regulation in response to envelope stress, environmental stress and changes in metabolite concentrations. Also binds with high specificity to tRNAs. This chain is RNA-binding protein Hfq, found in Anoxybacillus flavithermus (strain DSM 21510 / WK1).